A 245-amino-acid chain; its full sequence is 1-(5-phosphoribosyl)-5-[(5-phosphoribosylamino)methylideneamino] imidazole-4-carboxamide isomerase (245 aa).

D8 acts as the Proton acceptor in catalysis. Residue D130 is the Proton donor of the active site.

The protein belongs to the HisA/HisF family.

The protein resides in the cytoplasm. The catalysed reaction is 1-(5-phospho-beta-D-ribosyl)-5-[(5-phospho-beta-D-ribosylamino)methylideneamino]imidazole-4-carboxamide = 5-[(5-phospho-1-deoxy-D-ribulos-1-ylimino)methylamino]-1-(5-phospho-beta-D-ribosyl)imidazole-4-carboxamide. It participates in amino-acid biosynthesis; L-histidine biosynthesis; L-histidine from 5-phospho-alpha-D-ribose 1-diphosphate: step 4/9. The polypeptide is 1-(5-phosphoribosyl)-5-[(5-phosphoribosylamino)methylideneamino] imidazole-4-carboxamide isomerase (Ectopseudomonas mendocina (strain ymp) (Pseudomonas mendocina)).